The sequence spans 206 residues: Transcription factor BTF3 (206 aa).

Residues 1–42 (MRRTGAPAQADSRGRGRARGGCPGGEATLSQPPPRGGTRGQE) form a disordered region. Arginine 19 is subject to Omega-N-methylarginine. The residue at position 30 (serine 30) is a Phosphoserine. Lysine 46 and lysine 54 each carry N6-methyllysine. Residues 82–147 (TADDKKLQFS…AETKQLTEML (66 aa)) enclose the NAC-A/B domain. Threonine 160 carries the post-translational modification Phosphothreonine. Residues 170–206 (PKQSVDGKAPLATGEDDDDEVPDLVENFDEASKNEAN) are disordered. Serine 173 carries the post-translational modification Phosphoserine. Over residues 183 to 198 (GEDDDDEVPDLVENFD) the composition is skewed to acidic residues.

Belongs to the NAC-beta family. Part of the nascent polypeptide-associated complex (NAC), which is a heterodimer of NACA and BTF3 (via NAC-A/B domains). NAC associates with ribosomes through the BTF3/NACB subunit. Both subunits can contact nascent polypeptide chains.

Its subcellular location is the cytoplasm. It is found in the nucleus. When associated with NACA, prevents inappropriate targeting of non-secretory polypeptides to the endoplasmic reticulum (ER). Binds to nascent polypeptide chains as they emerge from the ribosome and blocks their interaction with the signal recognition particle (SRP), which normally targets nascent secretory peptides to the ER. BTF3 is also a general transcription factor that can form a stable complex with RNA polymerase II. Required for the initiation of transcription. The protein is Transcription factor BTF3 (BTF3) of Homo sapiens (Human).